The sequence spans 194 residues: Casparian strip membrane protein 2 (194 aa).

At 1 to 32 (MSTTIDIPESSKVVKGKGVVAAPLRPGGWKKG) the chain is on the cytoplasmic side. The helical transmembrane segment at 33-53 (VAIMDFILRLGAIAAALGAAA) threads the bilayer. At 54 to 82 (TMGTSDQTLPFFTQFFQFEASYDSFTTFQ) the chain is on the extracellular side. A helical transmembrane segment spans residues 83 to 103 (FFVITMALVGGYLVLSLPFSV). Residues 104–115 (VAIIRPHAVGPR) lie on the Cytoplasmic side of the membrane. Residues 116–136 (LFLIILDTVFLTLATASAASA) form a helical membrane-spanning segment. Residues 137–168 (AAVVYLAHNGDQDTNWLAICNQFGDFCAQTSS) are Extracellular-facing. The helical transmembrane segment at 169–189 (AVVSSFVAVVVFVLLIVMSAL) threads the bilayer. Over 190 to 194 (AMGKP) the chain is Cytoplasmic.

The protein belongs to the Casparian strip membrane proteins (CASP) family. As to quaternary structure, homodimer and heterodimers.

The protein localises to the cell membrane. Regulates membrane-cell wall junctions and localized cell wall deposition. Required for establishment of the Casparian strip membrane domain (CSD) and the subsequent formation of Casparian strips, a cell wall modification of the root endodermis that determines an apoplastic barrier between the intraorganismal apoplasm and the extraorganismal apoplasm and prevents lateral diffusion. The chain is Casparian strip membrane protein 2 from Vigna unguiculata (Cowpea).